We begin with the raw amino-acid sequence, 849 residues long: Serine/threonine-protein phosphatase 4 regulatory subunit 3B (849 aa).

In terms of domain architecture, WH1 spans 1 to 100; the sequence is MSDTRRRVKV…DEIWEKICQV (100 aa). Phosphoserine is present on residues Ser-117 and Ser-695. The span at 714–724 shows a compositional bias: acidic residues; that stretch reads EMWFNEDEEEE. Positions 714-849 are disordered; the sequence is EMWFNEDEEE…SPRKRPRLGS (136 aa). A compositionally biased stretch (basic and acidic residues) spans 733–764; sequence EKPKPEDDFPDNYEKFMETKKAKESEDKENLP. Positions 776 to 818 are enriched in polar residues; it reads FSHSASAANGTNSKSVVAQIPPATSNGSSSKTTNLPTSVTATK. Residues 827–838 are compositionally biased toward acidic residues; the sequence is YPDDEEEDEEEE. Ser-840 is subject to Phosphoserine.

This sequence belongs to the SMEK family. As to quaternary structure, serine/threonine-protein phosphatase 4 (PP4) occurs in different assemblies of the catalytic and one or more regulatory subunits. Component of the PP4 complex PPP4C-PPP4R2-PPP4R3B. Moderately expressed in tissues and specific brain regions examined.

The protein resides in the cytoplasm. It is found in the cytoskeleton. It localises to the microtubule organizing center. Its subcellular location is the centrosome. The protein localises to the nucleus. In terms of biological role, regulatory subunit of serine/threonine-protein phosphatase 4 (PP4). May regulate the activity of PPP4C at centrosomal microtubule organizing centers. The chain is Serine/threonine-protein phosphatase 4 regulatory subunit 3B from Homo sapiens (Human).